A 324-amino-acid polypeptide reads, in one-letter code: MSDRPAARPWGKCGSLCRREEIMVAFKGVWTQAFWKAVTAEFLAMLIFVLLSLGSTINWGGKENPLPVDMVLISLCFGLSIATMVQCFGHISGGHINPAVTVAMVCTRKISIAKSVFYIAAQCLGAIIGAGILYLVTPPSVVGGLGVTTVHGNLTAGHGLLVELIITFQLVFTIFASCDSKRTDVTGSIALAIGFSVAIGHLFAINYTGASMNPARSFGPAVIMGNWENHWIYWVGPIIGAVLAGGLYEYVFCPDVELKRRFKEAFSKAAQQTKGSYMEVEDNRSQVETEDLILKPGLVHVIDIDRGDEKKGKDPSGEIAQTQH.

The Cytoplasmic portion of the chain corresponds to 1–36 (MSDRPAARPWGKCGSLCRREEIMVAFKGVWTQAFWK). S-palmitoyl cysteine attachment occurs at residues Cys13 and Cys17. The helical transmembrane segment at 37–57 (AVTAEFLAMLIFVLLSLGSTI) threads the bilayer. Over 58–69 (NWGGKENPLPVD) the chain is Extracellular. A helical membrane pass occupies residues 70–89 (MVLISLCFGLSIATMVQCFG). The Cytoplasmic portion of the chain corresponds to 90 to 93 (HISG). Residues 94–101 (GHINPAVT) constitute an intramembrane region (discontinuously helical). Positions 97 to 99 (NPA) match the NPA 1 motif. The Cytoplasmic portion of the chain corresponds to 102-115 (VAMVCTRKISIAKS). A Phosphoserine; by PKG modification is found at Ser111. Residues 116-136 (VFYIAAQCLGAIIGAGILYLV) form a helical membrane-spanning segment. Topologically, residues 137 to 155 (TPPSVVGGLGVTTVHGNLT) are extracellular. A glycan (N-linked (GlcNAc...) asparagine) is linked at Asn153. The helical transmembrane segment at 156 to 176 (AGHGLLVELIITFQLVFTIFA) threads the bilayer. Topologically, residues 177 to 184 (SCDSKRTD) are cytoplasmic. Position 180 is a phosphoserine; by PKC (Ser180). The chain crosses the membrane as a helical span at residues 185–205 (VTGSIALAIGFSVAIGHLFAI). Residue Asn206 is glycosylated (N-linked (GlcNAc...) asparagine). At 206–208 (NYT) the chain is on the extracellular side. An intramembrane region (discontinuously helical) is located at residues 209–222 (GASMNPARSFGPAV). The NPA 2 motif lies at 213–215 (NPA). Residues 223-231 (IMGNWENHW) lie on the Extracellular side of the membrane. Residues 232–252 (IYWVGPIIGAVLAGGLYEYVF) form a helical membrane-spanning segment. The Cytoplasmic portion of the chain corresponds to 253-324 (CPDVELKRRF…PSGEIAQTQH (72 aa)). 2 positions are modified to phosphoserine: Ser276 and Ser285. Thr289 carries the post-translational modification Phosphothreonine. A compositionally biased stretch (basic and acidic residues) spans 305-316 (DRGDEKKGKDPS). The interval 305-324 (DRGDEKKGKDPSGEIAQTQH) is disordered.

The protein belongs to the MIP/aquaporin (TC 1.A.8) family. As to quaternary structure, homotetramer. The tetramers can form oligomeric arrays in membranes. The size of the oligomers differs between tissues and is smaller in skeletal muscle than in brain. Interaction between AQP4 oligomeric arrays in close-by cells can contribute to cell-cell adhesion. Part of a complex containing MLC1, TRPV4, HEPACAM and ATP1B1. In terms of processing, phosphorylation by PKC at Ser-180 reduces conductance by 50%. Phosphorylation by PKG at Ser-111 in response to glutamate increases conductance by 40%. Post-translationally, isoform 2: Palmitoylated on its N-terminal region. Isoform 1: Not palmitoylated. In terms of tissue distribution, not expressed in kidney, Detectable in gastric parietal and brain astroglial cells. The absence of AQP4 in kidney may be critical for the extreme urinary concentration that occurs in this species (up to 5,000 mosmol/kg H(2)O).

The protein localises to the cell membrane. The protein resides in the basolateral cell membrane. It localises to the endosome membrane. Its subcellular location is the sarcolemma. It is found in the cell projection. The enzyme catalyses H2O(in) = H2O(out). Its function is as follows. Forms a water-specific channel. Plays an important role in brain water homeostasis and in glymphatic solute transport. Required for a normal rate of water exchange across the blood brain interface. Required for normal levels of cerebrospinal fluid influx into the brain cortex and parenchyma along paravascular spaces that surround penetrating arteries, and for normal drainage of interstitial fluid along paravenous drainage pathways. Thereby, it is required for normal clearance of solutes from the brain interstitial fluid, including soluble beta-amyloid peptides derived from APP. Plays a redundant role in urinary water homeostasis and urinary concentrating ability. This Dipodomys merriami (Merriam's kangaroo rat) protein is Aquaporin-4 (AQP4).